The chain runs to 173 residues: Translation initiation factor IF-3 (173 aa).

It belongs to the IF-3 family. As to quaternary structure, monomer.

The protein localises to the cytoplasm. IF-3 binds to the 30S ribosomal subunit and shifts the equilibrium between 70S ribosomes and their 50S and 30S subunits in favor of the free subunits, thus enhancing the availability of 30S subunits on which protein synthesis initiation begins. The polypeptide is Translation initiation factor IF-3 (Methylorubrum extorquens (strain CM4 / NCIMB 13688) (Methylobacterium extorquens)).